The chain runs to 145 residues: uncharacterized protein (145 aa).

Residues 78-145 (KLQIVAKDRI…DVVEKISILW (68 aa)) form the ACT domain.

This is an uncharacterized protein from Methanocaldococcus jannaschii (strain ATCC 43067 / DSM 2661 / JAL-1 / JCM 10045 / NBRC 100440) (Methanococcus jannaschii).